The primary structure comprises 343 residues: Protein SOSEKI 4 (343 aa).

The DIX-like oligomerization domain stretch occupies residues 18 to 109; sequence RIVPVVYYLS…YVLKGSQILD (92 aa). Positions 148–194 are disordered; the sequence is RKLSMDASTQTDDRRRRKSPVDEVNEVTELSREEITSPPQSDSSPET. Residues 184–194 are compositionally biased toward polar residues; sequence SPPQSDSSPET. The short motif at 233–234 is the Association to cell membranes element; that stretch reads CG.

The protein belongs to the SOSEKI family. As to quaternary structure, homodimer. Forms long polymer filaments with other SOKs proteins polymers (e.g. SOK1, SOK2, SOK3 and SOK4) crucial for polar localization and biological activity. Binds to ANGUSTIFOLIA (AN). In terms of tissue distribution, expressed during embryogenesis and in roots.

It localises to the cell membrane. In terms of biological role, SOSEKI proteins (SOK1-5) locally interpret global polarity cues and can influence cell division orientation to coordinate cell polarization relative to body axes, probably by guiding ANGUSTIFOLIA (AN) polarized localization. Positive regulator of auxin (indole-3-acetic acid, IAA) biosynthesis and signaling pathway leading to the modulation of seedling growth, plant and inflorescence development. Negative regulator of stress responses (e.g. salinity and osmotic stress). In Arabidopsis thaliana (Mouse-ear cress), this protein is Protein SOSEKI 4.